The following is a 355-amino-acid chain: uncharacterized protein (355 aa).

An N-terminal signal peptide occupies residues 1–21; sequence MQKKVLFNDIVFVCFPITDNG. 6 N-linked (GlcNAc...) asparagine; by host glycosylation sites follow: N20, N78, N87, N156, N159, and N274. The Virion surface portion of the chain corresponds to 22–331; that stretch reads SIIISDIGYS…SSTSFFSRYG (310 aa). Residues 288–317 are disordered; sequence GSKSTPNGPNGPTPTPSNGPNGPTPVPGIP. A compositionally biased stretch (pro residues) spans 296 to 317; that stretch reads PNGPTPTPSNGPNGPTPVPGIP. N-linked (GlcNAc...) asparagine; by host glycosylation is present at N320. A helical transmembrane segment spans residues 332–352; sequence LWIIIAIILLIVIISAVGIYF. The Intravirion segment spans residues 353-355; the sequence is YLR.

The protein resides in the host membrane. Its subcellular location is the virion. This is an uncharacterized protein from Acanthamoeba polyphaga mimivirus (APMV).